Consider the following 310-residue polypeptide: N-acetylmuramic acid 6-phosphate etherase (310 aa).

One can recognise an SIS domain in the interval 64 to 227 (ITSRLKSNGR…STSVMIKLGK (164 aa)). Glutamate 92 functions as the Proton donor in the catalytic mechanism. The active site involves glutamate 123.

It belongs to the GCKR-like family. MurNAc-6-P etherase subfamily. As to quaternary structure, homodimer.

It catalyses the reaction N-acetyl-D-muramate 6-phosphate + H2O = N-acetyl-D-glucosamine 6-phosphate + (R)-lactate. Its pathway is amino-sugar metabolism; N-acetylmuramate degradation. Its function is as follows. Specifically catalyzes the cleavage of the D-lactyl ether substituent of MurNAc 6-phosphate, producing GlcNAc 6-phosphate and D-lactate. The sequence is that of N-acetylmuramic acid 6-phosphate etherase from Prochlorococcus marinus (strain NATL2A).